Here is a 224-residue protein sequence, read N- to C-terminus: tRNA (guanine-N(7)-)-methyltransferase (224 aa).

Positions 54, 79, and 129 each coordinate S-adenosyl-L-methionine. Asp129 is an active-site residue. 2 residues coordinate substrate: Lys133 and Asp165.

The protein belongs to the class I-like SAM-binding methyltransferase superfamily. TrmB family.

The enzyme catalyses guanosine(46) in tRNA + S-adenosyl-L-methionine = N(7)-methylguanosine(46) in tRNA + S-adenosyl-L-homocysteine. Its pathway is tRNA modification; N(7)-methylguanine-tRNA biosynthesis. In terms of biological role, catalyzes the formation of N(7)-methylguanine at position 46 (m7G46) in tRNA. This chain is tRNA (guanine-N(7)-)-methyltransferase, found in Chlamydia pneumoniae (Chlamydophila pneumoniae).